A 44-amino-acid chain; its full sequence is Photosystem I reaction center subunit IX (44 aa).

Residues 7-27 (YLSTAPVLAILCVSFLAALLI) traverse the membrane as a helical segment.

This sequence belongs to the PsaJ family.

The protein resides in the plastid. The protein localises to the chloroplast thylakoid membrane. Functionally, may help in the organization of the PsaE and PsaF subunits. The sequence is that of Photosystem I reaction center subunit IX from Pinus thunbergii (Japanese black pine).